The sequence spans 255 residues: tRNA pseudouridine synthase A (255 aa).

Asp60 (nucleophile) is an active-site residue. Tyr118 contacts substrate.

This sequence belongs to the tRNA pseudouridine synthase TruA family. In terms of assembly, homodimer.

It catalyses the reaction uridine(38/39/40) in tRNA = pseudouridine(38/39/40) in tRNA. In terms of biological role, formation of pseudouridine at positions 38, 39 and 40 in the anticodon stem and loop of transfer RNAs. This is tRNA pseudouridine synthase A from Leuconostoc mesenteroides subsp. mesenteroides (strain ATCC 8293 / DSM 20343 / BCRC 11652 / CCM 1803 / JCM 6124 / NCDO 523 / NBRC 100496 / NCIMB 8023 / NCTC 12954 / NRRL B-1118 / 37Y).